Consider the following 1129-residue polypeptide: ISWI chromatin-remodeling complex ATPase ISW1 (1129 aa).

The interval Lys144 to Asp177 is disordered. Residues Gly147 to Lys160 are compositionally biased toward basic residues. Residues Glu164 to Asp177 show a composition bias toward acidic residues. Residues Val208 to Asp373 form the Helicase ATP-binding domain. Residue Asp221–Thr228 coordinates ATP. The DEAH box motif lies at Asp324 to His327. The Helicase C-terminal domain occupies Val506–Ser657. Residues Phe683–Asp705 form a disordered region. At Thr694 the chain carries Phosphothreonine. Ser846 bears the Phosphoserine mark. SANT domains follow at residues Glu882–Glu935 and Asn988–Cys1052. The span at Lys1073–Asp1108 shows a compositional bias: basic and acidic residues. The tract at residues Lys1073–His1129 is disordered.

This sequence belongs to the SNF2/RAD54 helicase family. ISWI subfamily. Component of the ISW1A complex, which at least consists of ISW1 and IOC3. Component of the ISW1B complex, which at least consists of ISW1, IOC2 and IOC4.

It is found in the nucleus. In terms of biological role, catalytic component of ISW1-type complexes, which act by remodeling the chromatin by catalyzing an ATP-dependent alteration in the structure of nucleosomal DNA. They are involved in coordinating transcriptional repression, activation and elongation phases. The ISW1A complex represses gene expression at initiation through specific positioning of a promoter proximal dinucleosome. The ISW1B complex acts within coding regions to control the amount of RNA polymerase II released into productive elongation and to coordinate elongation with termination and pre-mRNA processing. This Saccharomyces cerevisiae (strain ATCC 204508 / S288c) (Baker's yeast) protein is ISWI chromatin-remodeling complex ATPase ISW1 (ISW1).